The chain runs to 154 residues: Transcriptional repressor NrdR (154 aa).

A zinc finger lies at 3–34; that stretch reads CPTCQYNGTRVVDSRPADDGNSIRRRRECEKC. The 91-residue stretch at 49–139 folds into the ATP-cone domain; it reads LIVVKKDGAR…VYRQFKDISV (91 aa).

It belongs to the NrdR family. The cofactor is Zn(2+).

In terms of biological role, negatively regulates transcription of bacterial ribonucleotide reductase nrd genes and operons by binding to NrdR-boxes. The protein is Transcriptional repressor NrdR of Listeria monocytogenes serotype 4a (strain HCC23).